The sequence spans 263 residues: Flagellar L-ring protein (263 aa).

Positions 1–15 (MKRLLCLLLLTTLTG) are cleaved as a signal peptide. Residue Cys16 is the site of N-palmitoyl cysteine attachment. Cys16 carries the S-diacylglycerol cysteine lipid modification. Residues 123-143 (KSADAELSKSNDSSMDPLQVG) form a disordered region.

It belongs to the FlgH family. The basal body constitutes a major portion of the flagellar organelle and consists of four rings (L,P,S, and M) mounted on a central rod.

The protein resides in the cell outer membrane. Its subcellular location is the bacterial flagellum basal body. In terms of biological role, assembles around the rod to form the L-ring and probably protects the motor/basal body from shearing forces during rotation. The protein is Flagellar L-ring protein of Aliivibrio fischeri (strain ATCC 700601 / ES114) (Vibrio fischeri).